Consider the following 266-residue polypeptide: MNQCYFLSSFLSPQQPESPPLYSFQEINDLLALNFTDKDWQSYVILRRFFDLENFAFFWAGKSIPFSFGTITNSNVESLLRLQMWSDEWEFEDFFKDFLLRYKTPQERLTHFSELVRDFLDHYQDYPSEFLRTYFRFKQDLRIILAGFRARVMQKDVSFVLRDEDSSNPIVLHVLMQKDSPNYELPDEFFELRDVLGDYGRLPHMLNQTLSFYEFHKVEEMSRDKYLNTDAILSRLTTYLMAIRSSWASVQKGKELINLMEKGIRW.

It belongs to the chlamydial CPn_0087/CT_309/TC_0583 family.

This is an uncharacterized protein from Chlamydia trachomatis serovar D (strain ATCC VR-885 / DSM 19411 / UW-3/Cx).